Consider the following 201-residue polypeptide: Anthranilate synthase component II (201 aa).

The 194-residue stretch at 3–196 (DILLLDNIDS…LAWAQRKLEP (194 aa)) folds into the Glutamine amidotransferase type-1 domain. Position 57 to 59 (57 to 59 (GPG)) interacts with L-glutamine. Catalysis depends on C84, which acts as the Nucleophile; for GATase activity. Residues Q88 and 134–135 (SL) each bind L-glutamine. Active-site for GATase activity residues include H170 and E172.

In terms of assembly, tetramer of two components I and two components II.

The catalysed reaction is chorismate + L-glutamine = anthranilate + pyruvate + L-glutamate + H(+). It carries out the reaction N-(5-phospho-beta-D-ribosyl)anthranilate + diphosphate = 5-phospho-alpha-D-ribose 1-diphosphate + anthranilate. It functions in the pathway amino-acid biosynthesis; L-tryptophan biosynthesis; L-tryptophan from chorismate: step 1/5. Its pathway is amino-acid biosynthesis; L-tryptophan biosynthesis; L-tryptophan from chorismate: step 2/5. This is Anthranilate synthase component II (trpG-TRPD) from Shigella dysenteriae.